A 20-amino-acid chain; its full sequence is Zinc metalloproteinase-disintegrin-like uracoina-1 (20 aa).

The protein belongs to the venom metalloproteinase (M12B) family. P-III subfamily. In terms of assembly, monomer. The cofactor is Zn(2+). As to expression, expressed by the venom gland.

The protein resides in the secreted. With respect to regulation, inhibited by ethylenediaminetetraacetic acid (EDTA) and 1,10-phenanthroline. Not inhibited by tosyl-L-lysine chloromethyl ketone (TCLK) and phenylmethanesulfonylfluoride (PMSF). Functionally, snake venom zinc metalloprotease that possesses hemorrhagic activity (minimum hemorrhagic dose, MHD=4.7 ug) when injected intradermally into mice. Degrades the alpha-chain of fibrinogen (FGA). This Crotalus vegrandis (Uracoan rattlesnake) protein is Zinc metalloproteinase-disintegrin-like uracoina-1.